A 126-amino-acid polypeptide reads, in one-letter code: Small ribosomal subunit protein uS13 (126 aa).

Residues 92–126 (HRRGLPVRGQRTKTNARTRKGPRKTVAGKKKATRK) are disordered.

The protein belongs to the universal ribosomal protein uS13 family. Part of the 30S ribosomal subunit. Forms a loose heterodimer with protein S19. Forms two bridges to the 50S subunit in the 70S ribosome.

In terms of biological role, located at the top of the head of the 30S subunit, it contacts several helices of the 16S rRNA. In the 70S ribosome it contacts the 23S rRNA (bridge B1a) and protein L5 of the 50S subunit (bridge B1b), connecting the 2 subunits; these bridges are implicated in subunit movement. Contacts the tRNAs in the A and P-sites. The polypeptide is Small ribosomal subunit protein uS13 (Deinococcus geothermalis (strain DSM 11300 / CIP 105573 / AG-3a)).